The following is a 227-amino-acid chain: Translation initiation factor 6 (227 aa).

The protein belongs to the eIF-6 family.

Binds to the 50S ribosomal subunit and prevents its association with the 30S ribosomal subunit to form the 70S initiation complex. The polypeptide is Translation initiation factor 6 (Methanococcus maripaludis (strain C6 / ATCC BAA-1332)).